Consider the following 178-residue polypeptide: Large ribosomal subunit protein uL6 (178 aa).

Belongs to the universal ribosomal protein uL6 family. As to quaternary structure, part of the 50S ribosomal subunit.

In terms of biological role, this protein binds to the 23S rRNA, and is important in its secondary structure. It is located near the subunit interface in the base of the L7/L12 stalk, and near the tRNA binding site of the peptidyltransferase center. This Francisella tularensis subsp. mediasiatica (strain FSC147) protein is Large ribosomal subunit protein uL6.